The chain runs to 402 residues: 8-amino-7-oxononanoate synthase (402 aa).

Arginine 26 is a substrate binding site. 114–115 (GY) provides a ligand contact to pyridoxal 5'-phosphate. A substrate-binding site is contributed by histidine 139. Positions 182, 210, and 239 each coordinate pyridoxal 5'-phosphate. Lysine 242 carries the post-translational modification N6-(pyridoxal phosphate)lysine. Residue threonine 359 participates in substrate binding.

The protein belongs to the class-II pyridoxal-phosphate-dependent aminotransferase family. BioF subfamily. In terms of assembly, homodimer. The cofactor is pyridoxal 5'-phosphate.

The enzyme catalyses 6-carboxyhexanoyl-[ACP] + L-alanine + H(+) = (8S)-8-amino-7-oxononanoate + holo-[ACP] + CO2. Its pathway is cofactor biosynthesis; biotin biosynthesis. Its function is as follows. Catalyzes the decarboxylative condensation of pimeloyl-[acyl-carrier protein] and L-alanine to produce 8-amino-7-oxononanoate (AON), [acyl-carrier protein], and carbon dioxide. The polypeptide is 8-amino-7-oxononanoate synthase (Halorhodospira halophila (strain DSM 244 / SL1) (Ectothiorhodospira halophila (strain DSM 244 / SL1))).